An 854-amino-acid chain; its full sequence is MGSLFRSETMCLAQLFLQSGTAYECLSVLGEKGLVEFRDLNQNVSSFQRKFVGEVKRCEELERILAYLVQEINRADIPLPEGDTSPPAPPLKQVLEMQEQLQKLEVELREVTKNKEKLRKNLLELIEYTHMLRVTKTFVKRNVEFEPTYEEFPPLENESLLDYSCMQRLGAKLGFVSGLINQGKVEAFEKMLWRVCKGYTIVTYAELDEPLEDPETGEVIKWYVFLISFWGEQIGHKVKKICDCYHCHVYPYPNTAEERREIQEGLNTRIQDLYTVLHKTEDYLRQVLCKAAESVYSRVIQVKKMKAIYHMLNMCSFDVTNKCLIAEVWCPEADLHELRRALEEGSRESGGTIPSFMNTIPTKETPPTLIRTNKFTEGFQNIVDAYGVGSYQEVNPALFTIITFPFLFAVMFGDFGHGFVMFLFALLLVLNENHPRLNQSQEIMRMFFNGRYILLLMGLFSVYTGLIYNDCFSKSVNLFGSRWNVSAMYSSSHSPEEQRKMVLWNDSIVRHHSVLQLDPSVPGVFRGPYPFGIDPIWNLATNRLTFLNSFKMKMSVILGITHMTFGVILGIFNHLHFRKKFNICLVSIPELLFMLCIFGYLIFMIIYKWLVYSAETSRTAPSILIEFISMFLFLASDTGGLYPGQEHVQRLLLLITVLSVPVLFLGKPLFLLWLHRGRSCFGVGRSGYTLVRKDSEEEVSLLGGQDIEEGNNQMEDGCREVTCEEFDFGEILMTQIIHSIEYCLGCISNTASYLRLWALSLAHAQLSEVLWAMLMHVGLRVDTAYGVLVLLPVIAFFAVLTIFILLIMEGLSAFLHAIRLHWVEFQNKFYVGAGTKFVPFSFRLLSSKFSDDLA.

Over 1–393 (MGSLFRSETM…DAYGVGSYQE (393 aa)) the chain is Cytoplasmic. A helical transmembrane segment spans residues 394–412 (VNPALFTIITFPFLFAVMF). Residues 413-414 (GD) are Vacuolar-facing. The chain crosses the membrane as a helical span at residues 415–431 (FGHGFVMFLFALLLVLN). Residues 432–445 (ENHPRLNQSQEIMR) lie on the Cytoplasmic side of the membrane. A helical membrane pass occupies residues 446-475 (MFFNGRYILLLMGLFSVYTGLIYNDCFSKS). Residues 476–549 (VNLFGSRWNV…ATNRLTFLNS (74 aa)) lie on the Vacuolar side of the membrane. The chain crosses the membrane as a helical span at residues 550–569 (FKMKMSVILGITHMTFGVIL). Over 570 to 587 (GIFNHLHFRKKFNICLVS) the chain is Cytoplasmic. A helical transmembrane segment spans residues 588–608 (IPELLFMLCIFGYLIFMIIYK). Residues 609 to 651 (WLVYSAETSRTAPSILIEFISMFLFLASDTGGLYPGQEHVQRL) lie on the Vacuolar side of the membrane. Residues 652–671 (LLLITVLSVPVLFLGKPLFL) traverse the membrane as a helical segment. Over 672-739 (LWLHRGRSCF…EILMTQIIHS (68 aa)) the chain is Cytoplasmic. Residues Ser695 and Ser700 each carry the phosphoserine modification. A helical transmembrane segment spans residues 740 to 764 (IEYCLGCISNTASYLRLWALSLAHA). The Vacuolar segment spans residues 765 to 785 (QLSEVLWAMLMHVGLRVDTAY). A helical membrane pass occupies residues 786-824 (GVLVLLPVIAFFAVLTIFILLIMEGLSAFLHAIRLHWVE). At 825–854 (FQNKFYVGAGTKFVPFSFRLLSSKFSDDLA) the chain is on the cytoplasmic side.

This sequence belongs to the V-ATPase 116 kDa subunit family. In terms of assembly, V-ATPase is a heteromultimeric enzyme made up of two complexes: the ATP-hydrolytic V1 complex and the proton translocation V0 complex. The V1 complex consists of three catalytic AB heterodimers that form a heterohexamer, three peripheral stalks each consisting of EG heterodimers, one central rotor including subunits D and F, and the regulatory subunits C and H. The proton translocation complex V0 consists of the proton transport subunit a, a ring of proteolipid subunits c9c'', rotary subunit d, subunits e and f, and the accessory subunits ATP6AP1/Ac45 and ATP6AP2/PRR. Directly interacts with PSCD2 through its N-terminal cytosolic tail in an intra-endosomal acidification-dependent manner. Disruption of this interaction results in the inhibition of endocytosis. Interacts with SPAAR. Highly expressed in lung, kidney and spleen.

The protein localises to the cell membrane. It localises to the endosome membrane. Its function is as follows. Subunit of the V0 complex of vacuolar(H+)-ATPase (V-ATPase), a multisubunit enzyme composed of a peripheral complex (V1) that hydrolyzes ATP and a membrane integral complex (V0) that translocates protons. V-ATPase is responsible for acidifying and maintaining the pH of intracellular compartments and in some cell types, is targeted to the plasma membrane, where it is responsible for acidifying the extracellular environment. Essential component of the endosomal pH-sensing machinery. May play a role in maintaining the Golgi functions, such as glycosylation maturation, by controlling the Golgi pH. In aerobic conditions, involved in intracellular iron homeostasis, thus triggering the activity of Fe(2+) prolyl hydroxylase (PHD) enzymes, and leading to HIF1A hydroxylation and subsequent proteasomal degradation. The protein is V-type proton ATPase 116 kDa subunit a 2 (ATP6V0A2) of Bos taurus (Bovine).